The sequence spans 688 residues: Potassium-transporting ATPase ATP-binding subunit (688 aa).

A run of 4 helical transmembrane segments spans residues 34-54 (PVMF…LAIL), 62-82 (AMFT…ANMA), 219-239 (VALT…TATL), and 260-280 (VLVA…LSAI). Residue aspartate 313 is the 4-aspartylphosphate intermediate of the active site. ATP is bound by residues aspartate 350, glutamate 354, 383–390 (FSAQTRMS), and lysine 401. The Mg(2+) site is built by aspartate 524 and aspartate 528. 3 consecutive transmembrane segments (helical) span residues 594–614 (FAII…LNIM), 622–642 (AILS…PLAL), and 662–682 (IYGL…DLLL).

The protein belongs to the cation transport ATPase (P-type) (TC 3.A.3) family. Type IA subfamily. In terms of assembly, the system is composed of three essential subunits: KdpA, KdpB and KdpC.

The protein resides in the cell inner membrane. It catalyses the reaction K(+)(out) + ATP + H2O = K(+)(in) + ADP + phosphate + H(+). Functionally, part of the high-affinity ATP-driven potassium transport (or Kdp) system, which catalyzes the hydrolysis of ATP coupled with the electrogenic transport of potassium into the cytoplasm. This subunit is responsible for energy coupling to the transport system and for the release of the potassium ions to the cytoplasm. In Yersinia pseudotuberculosis serotype O:1b (strain IP 31758), this protein is Potassium-transporting ATPase ATP-binding subunit.